Reading from the N-terminus, the 132-residue chain is Histone H2A-alpha (132 aa).

S2 carries the N-acetylserine modification. 2 positions are modified to N6-acetyllysine: K5 and K9. Position 106 is an N5-methylglutamine (Q106). S129 is modified (phosphoserine). The [ST]-Q motif signature appears at 129–130 (SQ).

Belongs to the histone H2A family. In terms of assembly, the nucleosome is a histone octamer containing two molecules each of H2A, H2B, H3 and H4 assembled in one H3-H4 heterotetramer and two H2A-H2B heterodimers. The octamer wraps approximately 147 bp of DNA. Interacts with mdb1 (via BRCT domain) in vitro; this interaction requires phosphorylation of this protein at the S/T-Q motif. Phosphorylated to form H2AS128ph (gamma-H2A) in response to DNA double-strand breaks (DSBs) generated by exogenous genotoxic agents and by stalled replication forks. Phosphorylation is dependent on the DNA damage checkpoint kinases rad3/ATR and tel1/ATM, spreads on either side of a detected DSB site and may mark the surrounding chromatin for recruitment of proteins required for DNA damage signaling and repair. Gamma-H2A is required for recruiting crb2, a modulator of DNA damage checkpoint signaling, to DSB sites. Gamma-H2A is removed from the DNA prior to the strand invasion-primer extension step of the repair process and subsequently dephosphorylated. Dephosphorylation is necessary for efficient recovery from the DNA damage checkpoint. In terms of processing, acetylated by esa1 to form H2AK4ac and H2AK7ac.

It localises to the nucleus. Its subcellular location is the chromosome. Core component of nucleosome which plays a central role in DNA double strand break (DSB) repair. Nucleosomes wrap and compact DNA into chromatin, limiting DNA accessibility to the cellular machineries which require DNA as a template. Histones thereby play a central role in transcription regulation, DNA repair, DNA replication and chromosomal stability. DNA accessibility is regulated via a complex set of post-translational modifications of histones, also called histone code, and nucleosome remodeling. The protein is Histone H2A-alpha (hta1) of Schizosaccharomyces pombe (strain 972 / ATCC 24843) (Fission yeast).